A 94-amino-acid chain; its full sequence is MGFLSYFRSQKKRSASVAKERLQIIVARERSQTATGPDYLPMLKEELLDVIRKYVQVDRDAVNFQLDREGDCEVLELNITLPDQQDQAAAHDRG.

The protein belongs to the MinE family.

Prevents the cell division inhibition by proteins MinC and MinD at internal division sites while permitting inhibition at polar sites. This ensures cell division at the proper site by restricting the formation of a division septum at the midpoint of the long axis of the cell. In Alkalilimnicola ehrlichii (strain ATCC BAA-1101 / DSM 17681 / MLHE-1), this protein is Cell division topological specificity factor.